We begin with the raw amino-acid sequence, 95 residues long: Large ribosomal subunit protein uL23 (95 aa).

Belongs to the universal ribosomal protein uL23 family. As to quaternary structure, part of the 50S ribosomal subunit. Contacts protein L29, and trigger factor when it is bound to the ribosome.

In terms of biological role, one of the early assembly proteins it binds 23S rRNA. One of the proteins that surrounds the polypeptide exit tunnel on the outside of the ribosome. Forms the main docking site for trigger factor binding to the ribosome. This Desulfitobacterium hafniense (strain DSM 10664 / DCB-2) protein is Large ribosomal subunit protein uL23.